A 781-amino-acid chain; its full sequence is Probable aminopeptidase 2 (781 aa).

Residues Glu-105 and 237–241 (GAMEN) contribute to the substrate site. His-272 is a binding site for Zn(2+). The active-site Proton acceptor is the Glu-273. Residues His-276 and Glu-295 each coordinate Zn(2+).

Belongs to the peptidase M1 family. Zn(2+) is required as a cofactor.

It is found in the cytoplasm. This is Probable aminopeptidase 2 (ape2) from Sulfurisphaera tokodaii (strain DSM 16993 / JCM 10545 / NBRC 100140 / 7) (Sulfolobus tokodaii).